Reading from the N-terminus, the 227-residue chain is Cytochrome c oxidase subunit 2 (227 aa).

At 1–26 (MATWSNFNLQNSASPLMEQIIFFHDH) the chain is on the mitochondrial intermembrane side. Residues 27–51 (TLVILIMITILVGYLMISLFFNSYI) form a helical membrane-spanning segment. Residues 52-62 (NRFLLEGQMIE) lie on the Mitochondrial matrix side of the membrane. The helical transmembrane segment at 63 to 81 (LIWTILPAITLIFIALPSL) threads the bilayer. Residues 82 to 227 (RLLYLLDELN…NFINWINNYS (146 aa)) are Mitochondrial intermembrane-facing. Cu cation contacts are provided by His-161, Cys-196, Glu-198, Cys-200, His-204, and Met-207. Glu-198 is a Mg(2+) binding site.

This sequence belongs to the cytochrome c oxidase subunit 2 family. As to quaternary structure, component of the cytochrome c oxidase (complex IV, CIV), a multisubunit enzyme composed of a catalytic core of 3 subunits and several supernumerary subunits. The complex exists as a monomer or a dimer and forms supercomplexes (SCs) in the inner mitochondrial membrane with ubiquinol-cytochrome c oxidoreductase (cytochrome b-c1 complex, complex III, CIII). It depends on Cu cation as a cofactor.

It is found in the mitochondrion inner membrane. It carries out the reaction 4 Fe(II)-[cytochrome c] + O2 + 8 H(+)(in) = 4 Fe(III)-[cytochrome c] + 2 H2O + 4 H(+)(out). Its function is as follows. Component of the cytochrome c oxidase, the last enzyme in the mitochondrial electron transport chain which drives oxidative phosphorylation. The respiratory chain contains 3 multisubunit complexes succinate dehydrogenase (complex II, CII), ubiquinol-cytochrome c oxidoreductase (cytochrome b-c1 complex, complex III, CIII) and cytochrome c oxidase (complex IV, CIV), that cooperate to transfer electrons derived from NADH and succinate to molecular oxygen, creating an electrochemical gradient over the inner membrane that drives transmembrane transport and the ATP synthase. Cytochrome c oxidase is the component of the respiratory chain that catalyzes the reduction of oxygen to water. Electrons originating from reduced cytochrome c in the intermembrane space (IMS) are transferred via the dinuclear copper A center (CU(A)) of subunit 2 and heme A of subunit 1 to the active site in subunit 1, a binuclear center (BNC) formed by heme A3 and copper B (CU(B)). The BNC reduces molecular oxygen to 2 water molecules using 4 electrons from cytochrome c in the IMS and 4 protons from the mitochondrial matrix. The protein is Cytochrome c oxidase subunit 2 (COII) of Choristoneura fumiferana (Spruce budworm moth).